A 352-amino-acid chain; its full sequence is Uroporphyrinogen decarboxylase (352 aa).

Substrate-binding positions include 26–30, D76, Y153, S208, and H323; that span reads RQAGR.

It belongs to the uroporphyrinogen decarboxylase family. Homodimer.

The protein resides in the cytoplasm. The enzyme catalyses uroporphyrinogen III + 4 H(+) = coproporphyrinogen III + 4 CO2. The protein operates within porphyrin-containing compound metabolism; protoporphyrin-IX biosynthesis; coproporphyrinogen-III from 5-aminolevulinate: step 4/4. In terms of biological role, catalyzes the decarboxylation of four acetate groups of uroporphyrinogen-III to yield coproporphyrinogen-III. The chain is Uroporphyrinogen decarboxylase from Prochlorococcus marinus (strain NATL1A).